Consider the following 684-residue polypeptide: Extracellular lipase (684 aa).

The first 48 residues, 1–48, serve as a signal peptide directing secretion; it reads MKKKLIYAAVVSALLAGCGGSDDNKGDTSSYLDYLLTGSNAVGPSALA. Disordered regions lie at residues 321-405 and 462-493; these read SIPV…ADWG and QRERLRPGAGPDLEDLCRHAGGQEGGAGGDRS. Positions 385–405 are enriched in basic and acidic residues; that stretch reads ADCRSDPPERAAGRGEQADWG. Catalysis depends on Ser-568, which acts as the Nucleophile.

The protein belongs to the AB hydrolase superfamily. Lipase family. As to quaternary structure, monomer.

The protein localises to the secreted. It catalyses the reaction a triacylglycerol + H2O = a diacylglycerol + a fatty acid + H(+). The optimum chain lengths for the acyl moiety is C6 for ester hydrolysis and C6 and C8 for triacylglycerol hydrolysis. The polypeptide is Extracellular lipase (Aeromonas hydrophila).